Reading from the N-terminus, the 482-residue chain is Proton extrusion protein PxcA (482 aa).

Helical transmembrane passes span 265-285, 359-379, 406-426, and 442-462; these read FVLG…NLVI, PLKN…YFVL, IIIL…WEVI, and FINM…KYWI.

It belongs to the CemA family.

The protein resides in the cell inner membrane. Functionally, required for H(+) efflux immediately after light irradiation to form a rapid H(+) concentration gradient across the thylakoid membranes. Together with PxcL, contributes to transient H(+) uptake following dark to light transition. The protein is Proton extrusion protein PxcA of Acaryochloris marina (strain MBIC 11017).